The primary structure comprises 617 residues: Pentatricopeptide repeat-containing protein At4g18520, chloroplastic (617 aa).

A chloroplast-targeting transit peptide spans methionine 1–threonine 19. PPR repeat units follow at residues valine 116 to lysine 146, asparagine 147 to phenylalanine 181, asparagine 183 to asparagine 217, serine 222 to lysine 247, aspartate 248 to proline 282, asparagine 283 to threonine 317, aspartate 318 to arginine 348, asparagine 349 to alanine 383, asparagine 384 to lysine 418, asparagine 419 to arginine 449, aspartate 450 to proline 484, asparagine 485 to serine 519, asparagine 520 to lysine 550, and asparagine 551 to valine 585.

This sequence belongs to the PPR family. PCMP-A subfamily. As to quaternary structure, interacts with MORF8/RIP1, MORF2/RIP2 and MORF9/RIP9. As to expression, expressed specifically in aerial greening tissues, such as cotyledons, rosette leaves, cauline leaves, stems, sepals, stamens, carpels and siliques.

It localises to the plastid. The protein localises to the chloroplast. Functionally, required for proper chloroplast development. Involved in the regulation of plastid gene expression probably through regulation of plastid-encoded polymerase (PEP) dependent chloroplast transcription. Required for RNA editing of several chloroplastic transcripts, especially accD transcripts. Required for processing of the chloroplastic rpoA pre-mRNA. Required for the monocistronic rpoA transcript processing from the rpl23-rpl2-rps19-rpl22-rps3-rpl16-rpl14-rps8-rpl36-rps11-rpoA polycistron. Binds the intergenic sequence of rps11-rpoA for rpoA monocistronic RNA cleavage. In Arabidopsis thaliana (Mouse-ear cress), this protein is Pentatricopeptide repeat-containing protein At4g18520, chloroplastic (PCMP-A2).